Consider the following 63-residue polypeptide: Large ribosomal subunit protein uL29 (63 aa).

This sequence belongs to the universal ribosomal protein uL29 family.

This is Large ribosomal subunit protein uL29 from Histophilus somni (strain 129Pt) (Haemophilus somnus).